The following is a 601-amino-acid chain: ATP-dependent lipid A-core flippase (601 aa).

The next 4 helical transmembrane spans lie at 27-47, 83-103, 174-194, and 267-287; these read IGLF…QPML, LLIV…NYFL, LLWM…LIAV, and PLLQ…VLYL. An ABC transmembrane type-1 domain is found at 31 to 322; the sequence is LISIVGFLIF…LSEVSSTIQK (292 aa). The region spanning 354 to 590 is the ABC transporter domain; that stretch reads LEVRNLSFTY…NGYYSRLHAM (237 aa). An ATP-binding site is contributed by 388-395; that stretch reads GRSGSGKS.

This sequence belongs to the ABC transporter superfamily. Lipid exporter (TC 3.A.1.106) family. In terms of assembly, homodimer.

The protein resides in the cell inner membrane. It catalyses the reaction ATP + H2O + lipid A-core oligosaccharideSide 1 = ADP + phosphate + lipid A-core oligosaccharideSide 2.. In terms of biological role, involved in lipopolysaccharide (LPS) biosynthesis. Translocates lipid A-core from the inner to the outer leaflet of the inner membrane. Transmembrane domains (TMD) form a pore in the inner membrane and the ATP-binding domain (NBD) is responsible for energy generation. The protein is ATP-dependent lipid A-core flippase of Pseudomonas fluorescens (strain ATCC BAA-477 / NRRL B-23932 / Pf-5).